The sequence spans 342 residues: Nicotinate-nucleotide--dimethylbenzimidazole phosphoribosyltransferase (342 aa).

The active-site Proton acceptor is glutamate 311.

Belongs to the CobT family.

The enzyme catalyses 5,6-dimethylbenzimidazole + nicotinate beta-D-ribonucleotide = alpha-ribazole 5'-phosphate + nicotinate + H(+). The protein operates within nucleoside biosynthesis; alpha-ribazole biosynthesis; alpha-ribazole from 5,6-dimethylbenzimidazole: step 1/2. In terms of biological role, catalyzes the synthesis of alpha-ribazole-5'-phosphate from nicotinate mononucleotide (NAMN) and 5,6-dimethylbenzimidazole (DMB). This chain is Nicotinate-nucleotide--dimethylbenzimidazole phosphoribosyltransferase, found in Photobacterium profundum (strain SS9).